We begin with the raw amino-acid sequence, 248 residues long: Killer cell lectin-like receptor subfamily I member 2 (248 aa).

Topologically, residues 1 to 79 (MHKKKHIKHG…GIDPWLTTWQ (79 aa)) are cytoplasmic. The interval 19–44 (IGTKSPTFQEKQRPSKTDQRSTVWRE) is disordered. Residues 28-44 (EKQRPSKTDQRSTVWRE) are compositionally biased toward basic and acidic residues. The chain crosses the membrane as a helical; Signal-anchor for type II membrane protein span at residues 80-100 (MITVILATLCIILVTKVGFLI). Topologically, residues 101 to 248 (PSLFSKGEKQ…KKTYICEFNI (148 aa)) are extracellular. 3 disulfide bridges follow: Cys-132/Cys-145, Cys-161/Cys-244, and Cys-223/Cys-236. Residues 139–245 (FGNNFYCVFR…CSAKKTYICE (107 aa)) form the C-type lectin domain. Asn-197, Asn-214, and Asn-220 each carry an N-linked (GlcNAc...) asparagine glycan.

Heterodimer with KLRE1. In terms of tissue distribution, expressed in natural killer (NK) cells.

The protein resides in the cell membrane. Its function is as follows. Lectin-like receptor for natural killer (NK) cells. Heterodimer formation with KLRE1 mediates NK cell cytolytic activity. The polypeptide is Killer cell lectin-like receptor subfamily I member 2 (Mus musculus (Mouse)).